The primary structure comprises 2166 residues: Protein TIC236, chloroplastic (2166 aa).

Residues 1–37 (MSLRLQNPFLSTPLLHGSFNRREKRINVARRAFRSKR) constitute a chloroplast transit peptide. Residues 38 to 101 (IYSEKKQNDW…RSLAPVWEEG (64 aa)) lie on the Stromal side of the membrane. A helical transmembrane segment spans residues 102–122 (LFFLRCSVFFAVISGVCLLVW). At 123 to 2166 (YGQNKARVFV…LFEYSATSQD (2044 aa)) the chain is on the chloroplast intermembrane side. Positions 1611 to 1649 (MSEGEVSETDRGGAVKIPSWAKEKEDDEKRTSRDRSEER) are disordered. A compositionally biased stretch (basic and acidic residues) spans 1631–1649 (AKEKEDDEKRTSRDRSEER).

Belongs to the TamB family. Part of the TIC complex, which can interact with components of the TOC complex to form a larger import complex. Interacts with the TOC complex component TOC75-3.

The protein resides in the plastid. The protein localises to the chloroplast inner membrane. It is found in the chloroplast intermembrane space. Functionally, part of the inner chloroplast membrane translocon complex (TIC) which associates with the outer chloroplast membrane translocon complex (TOC) and forms a supercomplex involved in protein precursor import into the chloroplast stroma. Required for the import of HSP93, TIC40 and RBCS protein precursors in the chloroplast stroma. Links the outer and inner membrane translocons of the chloroplast envelope. The polypeptide is Protein TIC236, chloroplastic (Arabidopsis thaliana (Mouse-ear cress)).